The chain runs to 140 residues: Transcription antitermination protein NusB (140 aa).

The protein belongs to the NusB family.

Its function is as follows. Involved in transcription antitermination. Required for transcription of ribosomal RNA (rRNA) genes. Binds specifically to the boxA antiterminator sequence of the ribosomal RNA (rrn) operons. The polypeptide is Transcription antitermination protein NusB (Leptospira biflexa serovar Patoc (strain Patoc 1 / Ames)).